Consider the following 198-residue polypeptide: tRNA(Phe) 7-((3-amino-3-carboxypropyl)-4-demethylwyosine(37)-N(4))-methyltransferase 1 (198 aa).

The protein belongs to the TYW3 family.

The enzyme catalyses 4-demethyl-7-[(3S)-3-amino-3-carboxypropyl]wyosine(37) in tRNA(Phe) + S-adenosyl-L-methionine = 7-[(3S)-3-amino-3-carboxypropyl]wyosine(37) in tRNA(Phe) + S-adenosyl-L-homocysteine + H(+). Functionally, S-adenosyl-L-methionine-dependent methyltransferase that acts as a component of the wyosine derivatives biosynthesis pathway. Probably methylates N-4 position of wybutosine-86 to produce wybutosine-72. The chain is tRNA(Phe) 7-((3-amino-3-carboxypropyl)-4-demethylwyosine(37)-N(4))-methyltransferase 1 from Thermococcus kodakarensis (strain ATCC BAA-918 / JCM 12380 / KOD1) (Pyrococcus kodakaraensis (strain KOD1)).